A 1062-amino-acid polypeptide reads, in one-letter code: Valine--tRNA ligase, mitochondrial (1062 aa).

The N-terminal 15 residues, 1–15 (MPHLPLASFRPPLRG), are a transit peptide targeting the mitochondrion. The tract at residues 1–73 (MPHLPLASFR…AKGKPPAEST (73 aa)) is disordered. Residues 42 to 56 (RNREAKQKRLREKQA) are compositionally biased toward basic and acidic residues. Positions 146 to 156 (PNVTGSLHIGH) match the 'HIGH' region motif. The short motif at 659–663 (KMSKS) is the 'KMSKS' region element. ATP is bound at residue lysine 662.

Belongs to the class-I aminoacyl-tRNA synthetase family.

It localises to the mitochondrion. It carries out the reaction tRNA(Val) + L-valine + ATP = L-valyl-tRNA(Val) + AMP + diphosphate. Its function is as follows. Catalyzes the attachment of valine to tRNA(Val) in a two-step reaction: valine is first activated by ATP to form Val-AMP and then transferred to the acceptor end of tRNA(Val). The protein is Valine--tRNA ligase, mitochondrial (VARS2) of Sus scrofa (Pig).